The primary structure comprises 424 residues: Gamma-glutamyl phosphate reductase (424 aa).

The protein belongs to the gamma-glutamyl phosphate reductase family.

The protein resides in the cytoplasm. The enzyme catalyses L-glutamate 5-semialdehyde + phosphate + NADP(+) = L-glutamyl 5-phosphate + NADPH + H(+). Its pathway is amino-acid biosynthesis; L-proline biosynthesis; L-glutamate 5-semialdehyde from L-glutamate: step 2/2. Its function is as follows. Catalyzes the NADPH-dependent reduction of L-glutamate 5-phosphate into L-glutamate 5-semialdehyde and phosphate. The product spontaneously undergoes cyclization to form 1-pyrroline-5-carboxylate. The polypeptide is Gamma-glutamyl phosphate reductase (Shewanella woodyi (strain ATCC 51908 / MS32)).